A 573-amino-acid chain; its full sequence is PCNA-interacting partner (573 aa).

The tract at residues 463 to 511 is disordered; the sequence is VSEGAQPSVGKARLETSSENVHVDRSKDDKGPRKSTKRKLAKSKQPGVR. The span at 474-494 shows a compositional bias: basic and acidic residues; sequence ARLETSSENVHVDRSKDDKGP. The segment covering 495-504 has biased composition (basic residues); the sequence is RKSTKRKLAK.

Belongs to the PARI family. As to quaternary structure, interacts with RAD51 and PCNA. Interacts with PARP1. Interacts with TASOR. Present in testis (at protein level). Expressed in testis, gastrointestinal tract (jejunum, ileum, and colon) and immune system (thymus and spleen). Weakly expressed in lung, kidney, pituitary gland and muscle.

Its subcellular location is the cytoplasm. The protein resides in the nucleus. In terms of biological role, required to suppress inappropriate homologous recombination, thereby playing a central role DNA repair and in the maintenance of genomic stability. Antagonizes homologous recombination by interfering with the formation of the RAD51-DNA homologous recombination structure. Positively regulate the poly(ADP-ribosyl)ation activity of PARP1; however such function may be indirect. Binds single-strand DNA and poly(A) homopolymers. The polypeptide is PCNA-interacting partner (Parpbp) (Rattus norvegicus (Rat)).